The chain runs to 171 residues: Large ribosomal subunit protein bL9 (171 aa).

This sequence belongs to the bacterial ribosomal protein bL9 family.

Its function is as follows. Binds to the 23S rRNA. This is Large ribosomal subunit protein bL9 from Rickettsia rickettsii (strain Iowa).